Reading from the N-terminus, the 318-residue chain is Ribose-phosphate pyrophosphokinase 2 (318 aa).

Residue 96–101 (RQDKKD) coordinates ATP. Mg(2+)-binding residues include Asp128, His130, Asp139, and Asp143. His130 is an ATP binding site. Positions 212-227 (KDRVAILVDDMADTCG) are binding of phosphoribosylpyrophosphate.

The protein belongs to the ribose-phosphate pyrophosphokinase family. In terms of assembly, homodimer. The active form is probably a hexamer composed of 3 homodimers. Mg(2+) serves as cofactor.

It carries out the reaction D-ribose 5-phosphate + ATP = 5-phospho-alpha-D-ribose 1-diphosphate + AMP + H(+). The protein operates within metabolic intermediate biosynthesis; 5-phospho-alpha-D-ribose 1-diphosphate biosynthesis; 5-phospho-alpha-D-ribose 1-diphosphate from D-ribose 5-phosphate (route I): step 1/1. Its activity is regulated as follows. Activated by magnesium and inorganic phosphate. Functionally, catalyzes the synthesis of phosphoribosylpyrophosphate (PRPP) that is essential for nucleotide synthesis. This is Ribose-phosphate pyrophosphokinase 2 (Prps2) from Rattus norvegicus (Rat).